Reading from the N-terminus, the 310-residue chain is GTPase Era (310 aa).

Residues 17–184 enclose the Era-type G domain; that stretch reads HSGFVALIGA…LDYLAQALPA (168 aa). A G1 region spans residues 25–32; that stretch reads GAPNAGKS. 25 to 32 contributes to the GTP binding site; that stretch reads GAPNAGKS. Positions 51 to 55 are G2; sequence QTTRA. A G3 region spans residues 72–75; it reads DTPG. Residues 72-76 and 134-137 contribute to the GTP site; these read DTPGI and NKVD. A G4 region spans residues 134-137; the sequence is NKVD. The interval 163–165 is G5; that stretch reads VSA. In terms of domain architecture, KH type-2 spans 215 to 292; the sequence is LHQELPYSSH…HLFLFVKVRE (78 aa).

This sequence belongs to the TRAFAC class TrmE-Era-EngA-EngB-Septin-like GTPase superfamily. Era GTPase family. In terms of assembly, monomer.

It is found in the cytoplasm. Its subcellular location is the cell inner membrane. Its function is as follows. An essential GTPase that binds both GDP and GTP, with rapid nucleotide exchange. Plays a role in 16S rRNA processing and 30S ribosomal subunit biogenesis and possibly also in cell cycle regulation and energy metabolism. The polypeptide is GTPase Era (Mesorhizobium japonicum (strain LMG 29417 / CECT 9101 / MAFF 303099) (Mesorhizobium loti (strain MAFF 303099))).